We begin with the raw amino-acid sequence, 1011 residues long: Probable calcium-transporting ATPase (1011 aa).

Residues 1–65 are Cytoplasmic-facing; that stretch reads MLPENLPTDP…WKLVLAQFED (65 aa). A helical membrane pass occupies residues 66–84; the sequence is TLVRILLLAATVSFAMAVV. Topologically, residues 85 to 90 are extracellular; that stretch reads ENNAAD. The chain crosses the membrane as a helical span at residues 91-110; it reads FVEPFIILLILILNATVGVW. At 111–258 the chain is on the cytoplasmic side; sequence QENRAEGAIE…QVKLDEFGVL (148 aa). A helical transmembrane segment spans residues 259 to 278; that stretch reads LSKVIGYICLVVFAVNLVRW. Topologically, residues 279–303 are extracellular; the sequence is YATHKPTKNETFFTRYIQPSVHCLK. A helical transmembrane segment spans residues 304–321; sequence VAVALAVAAIPEGLPAVV. The Cytoplasmic segment spans residues 322-770; the sequence is TTCLALGTRR…RYLISSNIGE (449 aa). The active-site 4-aspartylphosphate intermediate is the Asp-357. Lys-514 contributes to the ATP binding site. Residues 771–794 traverse the membrane as a helical segment; that stretch reads VVCILVTGLFGLPEALSPVQLLWV. Residues 795–835 are Extracellular-facing; sequence NLVTDGLPATALGFNAPDRDIMEQRPRRMEEPIVNGWLFMR. Residues 836–856 traverse the membrane as a helical segment; sequence YMVIGVYVGLATVGGFLWWFL. Residues 857-885 are Cytoplasmic-facing; it reads RHGFSWHDLTTYTACSDMTNGTCLLLANP. A helical membrane pass occupies residues 886–905; that stretch reads QTARAIALSILVVVEMLNAL. Topologically, residues 906-922 are extracellular; that stretch reads NALSENASLIVSRPSSN. A helical membrane pass occupies residues 923–942; it reads VWLLFAIFSSLSLHLIIMYV. Topologically, residues 943–1011 are cytoplasmic; sequence PFFAKLFNIV…MEKAQEKKKD (69 aa).

Belongs to the cation transport ATPase (P-type) (TC 3.A.3) family.

The protein localises to the flagellar pocket. It is found in the cell membrane. The catalysed reaction is Ca(2+)(in) + ATP + H2O = Ca(2+)(out) + ADP + phosphate + H(+). Functionally, this magnesium-dependent enzyme catalyzes the hydrolysis of ATP coupled with the transport of the calcium. In Trypanosoma brucei brucei, this protein is Probable calcium-transporting ATPase (TBA1).